Here is a 349-residue protein sequence, read N- to C-terminus: UPF0284 protein MM_0708 (349 aa).

It belongs to the UPF0284 family.

In Methanosarcina mazei (strain ATCC BAA-159 / DSM 3647 / Goe1 / Go1 / JCM 11833 / OCM 88) (Methanosarcina frisia), this protein is UPF0284 protein MM_0708.